Here is a 576-residue protein sequence, read N- to C-terminus: DNA mismatch repair protein MutL (576 aa).

Belongs to the DNA mismatch repair MutL/HexB family.

Functionally, this protein is involved in the repair of mismatches in DNA. It is required for dam-dependent methyl-directed DNA mismatch repair. May act as a 'molecular matchmaker', a protein that promotes the formation of a stable complex between two or more DNA-binding proteins in an ATP-dependent manner without itself being part of a final effector complex. The chain is DNA mismatch repair protein MutL from Chlamydia trachomatis serovar L2 (strain ATCC VR-902B / DSM 19102 / 434/Bu).